Consider the following 34-residue polypeptide: Photosystem II reaction center protein M (34 aa).

A helical membrane pass occupies residues 7 to 27 (GFVASLMFILVPAIFLIVLYI).

This sequence belongs to the PsbM family. In terms of assembly, PSII is composed of 1 copy each of membrane proteins PsbA, PsbB, PsbC, PsbD, PsbE, PsbF, PsbH, PsbI, PsbJ, PsbK, PsbL, PsbM, PsbT, PsbX, PsbY, PsbZ, Psb30/Ycf12, peripheral proteins PsbO, CyanoQ (PsbQ), PsbU, PsbV and a large number of cofactors. It forms dimeric complexes.

Its subcellular location is the cellular thylakoid membrane. Functionally, one of the components of the core complex of photosystem II (PSII). PSII is a light-driven water:plastoquinone oxidoreductase that uses light energy to abstract electrons from H(2)O, generating O(2) and a proton gradient subsequently used for ATP formation. It consists of a core antenna complex that captures photons, and an electron transfer chain that converts photonic excitation into a charge separation. This subunit is found at the monomer-monomer interface. This Synechococcus sp. (strain CC9902) protein is Photosystem II reaction center protein M.